Consider the following 80-residue polypeptide: Exodeoxyribonuclease 7 small subunit (80 aa).

Belongs to the XseB family. Heterooligomer composed of large and small subunits.

It is found in the cytoplasm. The enzyme catalyses Exonucleolytic cleavage in either 5'- to 3'- or 3'- to 5'-direction to yield nucleoside 5'-phosphates.. In terms of biological role, bidirectionally degrades single-stranded DNA into large acid-insoluble oligonucleotides, which are then degraded further into small acid-soluble oligonucleotides. In Pseudomonas putida (strain GB-1), this protein is Exodeoxyribonuclease 7 small subunit.